The following is a 146-amino-acid chain: Ubiquitin-conjugating enzyme E2 variant 1D (146 aa).

One can recognise a UBC core domain in the interval 13–146 (PRNFRLLEEL…LVQPPEGTCF (134 aa)).

Belongs to the ubiquitin-conjugating enzyme family. In terms of assembly, heterodimer with UBC35 or UBC36. In terms of tissue distribution, expressed in roots, shoots, leaves, stems, flowers and pollen.

Has no ubiquitin ligase activity on its own. The heterodimer with UBC catalyzes the synthesis of non-canonical poly-ubiquitin chains that are linked through 'Lys-63'. This type of poly-ubiquitination does not lead to protein degradation by the proteasome. Mediates transcriptional activation of target genes. May play a role in the control of progress through the cell cycle and differentiation. Involved in the error-free DNA repair pathway and contributes to the survival of cells after DNA damage. This Arabidopsis thaliana (Mouse-ear cress) protein is Ubiquitin-conjugating enzyme E2 variant 1D (UEV1D).